The chain runs to 328 residues: Tetraacyldisaccharide 4'-kinase (328 aa).

Residue 55–62 participates in ATP binding; the sequence is TAGGNGKT.

It belongs to the LpxK family.

The catalysed reaction is a lipid A disaccharide + ATP = a lipid IVA + ADP + H(+). It participates in glycolipid biosynthesis; lipid IV(A) biosynthesis; lipid IV(A) from (3R)-3-hydroxytetradecanoyl-[acyl-carrier-protein] and UDP-N-acetyl-alpha-D-glucosamine: step 6/6. Functionally, transfers the gamma-phosphate of ATP to the 4'-position of a tetraacyldisaccharide 1-phosphate intermediate (termed DS-1-P) to form tetraacyldisaccharide 1,4'-bis-phosphate (lipid IVA). The polypeptide is Tetraacyldisaccharide 4'-kinase (Shigella flexneri serotype 5b (strain 8401)).